Consider the following 1111-residue polypeptide: Phytochrome C (1111 aa).

The GAF domain maps to 213–393 (NMLLLCDALV…VFGVQINKEA (181 aa)). Residue cysteine 318 participates in phytochromobilin binding. PAS domains are found at residues 604 to 674 (IVNE…LEGS) and 737 to 808 (DYAR…TKLR). The Histidine kinase domain occupies 889–1111 (YLRHEVKDPE…FVILTEFPLI (223 aa)).

This sequence belongs to the phytochrome family. Homodimer. In terms of processing, contains one covalently linked phytochromobilin chromophore.

Functionally, regulatory photoreceptor which exists in two forms that are reversibly interconvertible by light: the Pr form that absorbs maximally in the red region of the spectrum and the Pfr form that absorbs maximally in the far-red region. Photoconversion of Pr to Pfr induces an array of morphogenic responses, whereas reconversion of Pfr to Pr cancels the induction of those responses. Pfr controls the expression of a number of nuclear genes including those encoding the small subunit of ribulose-bisphosphate carboxylase, chlorophyll A/B binding protein, protochlorophyllide reductase, rRNA, etc. It also controls the expression of its own gene(s) in a negative feedback fashion. The polypeptide is Phytochrome C (PHYC) (Arabidopsis thaliana (Mouse-ear cress)).